The chain runs to 178 residues: Cytochrome b6-f complex iron-sulfur subunit (178 aa).

A helical membrane pass occupies residues 20-42 (LLTFGTATGVALGALYPVANYFM). The Rieske domain maps to 65–161 (KTGWLASHQA…VDVDDDAVLV (97 aa)). C107, H109, C125, and H128 together coordinate [2Fe-2S] cluster. A disulfide bridge links C112 with C127.

Belongs to the Rieske iron-sulfur protein family. As to quaternary structure, the 4 large subunits of the cytochrome b6-f complex are cytochrome b6, subunit IV (17 kDa polypeptide, PetD), cytochrome f and the Rieske protein, while the 4 small subunits are PetG, PetL, PetM and PetN. The complex functions as a dimer. Requires [2Fe-2S] cluster as cofactor.

It is found in the cellular thylakoid membrane. It catalyses the reaction 2 oxidized [plastocyanin] + a plastoquinol + 2 H(+)(in) = 2 reduced [plastocyanin] + a plastoquinone + 4 H(+)(out). In terms of biological role, component of the cytochrome b6-f complex, which mediates electron transfer between photosystem II (PSII) and photosystem I (PSI), cyclic electron flow around PSI, and state transitions. In Prochlorococcus marinus subsp. pastoris (strain CCMP1986 / NIES-2087 / MED4), this protein is Cytochrome b6-f complex iron-sulfur subunit.